The following is an 89-amino-acid chain: Cell division topological specificity factor (89 aa).

The protein belongs to the MinE family.

Its function is as follows. Prevents the cell division inhibition by proteins MinC and MinD at internal division sites while permitting inhibition at polar sites. This ensures cell division at the proper site by restricting the formation of a division septum at the midpoint of the long axis of the cell. In Sodalis glossinidius (strain morsitans), this protein is Cell division topological specificity factor.